A 45-amino-acid polypeptide reads, in one-letter code: Large ribosomal subunit protein bL34c (45 aa).

Residues Met1 to Asn10 are compositionally biased toward polar residues. Positions Met1–Leu45 are disordered. Residues Leu32–Leu45 show a composition bias toward basic residues.

The protein belongs to the bacterial ribosomal protein bL34 family.

Its subcellular location is the plastid. The protein resides in the chloroplast. The sequence is that of Large ribosomal subunit protein bL34c from Gracilaria tenuistipitata var. liui (Red alga).